The chain runs to 254 residues: Thiazole synthase (254 aa).

Residue lysine 96 is the Schiff-base intermediate with DXP of the active site. Residues glycine 157, 183–184 (AG), and 205–206 (NT) contribute to the 1-deoxy-D-xylulose 5-phosphate site.

The protein belongs to the ThiG family. As to quaternary structure, homotetramer. Forms heterodimers with either ThiH or ThiS.

It localises to the cytoplasm. It catalyses the reaction [ThiS sulfur-carrier protein]-C-terminal-Gly-aminoethanethioate + 2-iminoacetate + 1-deoxy-D-xylulose 5-phosphate = [ThiS sulfur-carrier protein]-C-terminal Gly-Gly + 2-[(2R,5Z)-2-carboxy-4-methylthiazol-5(2H)-ylidene]ethyl phosphate + 2 H2O + H(+). The protein operates within cofactor biosynthesis; thiamine diphosphate biosynthesis. Functionally, catalyzes the rearrangement of 1-deoxy-D-xylulose 5-phosphate (DXP) to produce the thiazole phosphate moiety of thiamine. Sulfur is provided by the thiocarboxylate moiety of the carrier protein ThiS. In vitro, sulfur can be provided by H(2)S. The sequence is that of Thiazole synthase from Clostridium perfringens (strain SM101 / Type A).